The sequence spans 592 residues: Cyclin-dependent kinase-like 3 (592 aa).

The 283-residue stretch at 4 to 286 folds into the Protein kinase domain; that stretch reads YETLGKVGEG…SSDLLHHEYF (283 aa). Residues 10-18 and lysine 33 each bind ATP; that span reads VGEGSYGTV. Residues 44-50 carry the [NKR]KIAxRE motif; it reads NKIAMRE. Aspartate 125 functions as the Proton acceptor in the catalytic mechanism. The residue at position 158 (threonine 158) is a Phosphothreonine. At tyrosine 160 the chain carries Phosphotyrosine. A compositionally biased stretch (basic and acidic residues) spans 368–379; sequence GDISEPKKKEYE. 2 disordered regions span residues 368-390 and 459-485; these read GDIS…ANEN and RAKK…PGPI. Residues 466–477 show a composition bias toward polar residues; sequence SSQSIGQVMPNS.

The protein belongs to the protein kinase superfamily. CMGC Ser/Thr protein kinase family. CDC2/CDKX subfamily.

The protein localises to the cytoplasm. The enzyme catalyses L-seryl-[protein] + ATP = O-phospho-L-seryl-[protein] + ADP + H(+). It catalyses the reaction L-threonyl-[protein] + ATP = O-phospho-L-threonyl-[protein] + ADP + H(+). This chain is Cyclin-dependent kinase-like 3, found in Homo sapiens (Human).